The chain runs to 249 residues: Neurotrophic factor BDNF precursor form (249 aa).

Positions 1–18 are cleaved as a signal peptide; it reads MTILFLTMVISYFGCMKA. Positions 19-130 are excised as a propeptide; the sequence is APMKEVNVHG…AANMSMRVRR (112 aa). Asparagine 123 carries an N-linked (GlcNAc...) asparagine glycan. 3 disulfide bridges follow: cysteine 143–cysteine 210, cysteine 188–cysteine 239, and cysteine 198–cysteine 241.

Belongs to the NGF-beta family. Monomers and homodimers. Binds to NTRK2/TRKB. Can form heterodimers with other neurotrophin family members, such as NTF3 and NTF4 (in vitro), but the physiological relevance of this is not clear. BDNF precursor form: interacts with the heterodimer formed by NGFR and SORCS2. Mature BDNF has much lower affinity for the heterodimer formed by NGFR and SORCS2. N-glycosylated and glycosulfated, contrary to mature BDNF. In terms of processing, mature BDNF is produced by proteolytic removal of the propeptide, catalyzed by a FURIN family member. In addition, the precursor form is proteolytically cleaved within the propeptide, but this is not an obligatory intermediate for the production of mature BDNF. Can be converted into mature BDNF by plasmin (PLG). Expressed in the dorsal root ganglion and the spinal cord (at protein level). Detected in brain, especially in brain cortex, hippocampus, midbrain and cerebellum.

It localises to the secreted. In terms of biological role, important signaling molecule that activates signaling cascades downstream of NTRK2. During development, promotes the survival and differentiation of selected neuronal populations of the peripheral and central nervous systems. Participates in axonal growth, pathfinding and in the modulation of dendritic growth and morphology. Major regulator of synaptic transmission and plasticity at adult synapses in many regions of the CNS. The versatility of BDNF is emphasized by its contribution to a range of adaptive neuronal responses including long-term potentiation (LTP), long-term depression (LTD), certain forms of short-term synaptic plasticity, as well as homeostatic regulation of intrinsic neuronal excitability. Important signaling molecule that activates signaling cascades downstream of NTRK2. Activates signaling cascades via the heterodimeric receptor formed by NGFR and SORCS2. Signaling via NGFR and SORCS2 plays a role in synaptic plasticity and long-term depression (LTD). Binding to NGFR and SORCS2 promotes neuronal apoptosis. Promotes neuronal growth cone collapse. In Mus musculus (Mouse), this protein is Neurotrophic factor BDNF precursor form (Bdnf).